The primary structure comprises 839 residues: Taste receptor type 1 member 2 (839 aa).

The first 19 residues, 1 to 19, serve as a signal peptide directing secretion; the sequence is MRPRATTICSLFFLLRVLA. Residues 20–566 are Extracellular-facing; the sequence is EPAKNSDFYL…AFLEWHEAPT (547 aa). N-linked (GlcNAc...) asparagine glycans are attached at residues Asn84, Asn127, Asn248, Asn292, Asn312, Asn368, Asn428, Asn487, and Asn527. The chain crosses the membrane as a helical span at residues 567 to 587; it reads IVVALLAALGFLSTLAILVIF. The Cytoplasmic segment spans residues 588–602; the sequence is WRHFQTPMVRSAGGP. Residues 603–623 traverse the membrane as a helical segment; sequence MCFLMLTLLLVAYMVVPVYVG. The Extracellular portion of the chain corresponds to 624-635; it reads PPKVSTCFCRQA. Residues 636-656 form a helical membrane-spanning segment; it reads LFPLCFTICISCIAVRSFQIV. The Cytoplasmic portion of the chain corresponds to 657–681; the sequence is CVFKMASRFPRAYSYWVRYQGPYVS. A helical membrane pass occupies residues 682–702; that stretch reads MAFITVLKMVTVVIGMLATGL. Residues 703 to 727 lie on the Extracellular side of the membrane; the sequence is NPTTRIDPDDPKIMIVSCNPNYRNS. A helical transmembrane segment spans residues 728-748; the sequence is LFFNTGLDLLLSVVGFSFAYM. Residues 749–760 are Cytoplasmic-facing; sequence GKELPTNYNEAK. Residues 761 to 781 traverse the membrane as a helical segment; sequence FITLSMTFYFTSSVSLCTFMS. The Extracellular segment spans residues 782–784; it reads AYN. Residues 785–805 form a helical membrane-spanning segment; that stretch reads GVLVTIMDLLVTVLNLLAISL. Topologically, residues 806-839 are cytoplasmic; that stretch reads GYFGPKCYMILFYPERNTPAYFNSMIQGYTMRRD.

The protein belongs to the G-protein coupled receptor 3 family. TAS1R subfamily. Forms heterodimers with TAS1R3.

Its subcellular location is the cell membrane. Putative taste receptor. TAS1R2/TAS1R3 recognizes diverse natural and synthetic sweeteners. This Papio hamadryas (Hamadryas baboon) protein is Taste receptor type 1 member 2 (TAS1R2).